The sequence spans 497 residues: Di-/tripeptide transporter (497 aa).

The Cytoplasmic segment spans residues 1–36; it reads MQNLNKTEKTFFGQPRGLLTLFQTEFWERFSYYGMR. Residues 37 to 55 traverse the membrane as a helical segment; sequence AILVYYLYALTTADNAGLG. Residues 56–64 are Extracellular-facing; the sequence is LPKAQAMAI. The chain crosses the membrane as a helical span at residues 65-83; sequence VSIYGALVYLSTIVGGWVA. Residues 84–92 are Cytoplasmic-facing; sequence DRLLGASRT. The chain crosses the membrane as a helical span at residues 93–111; it reads IFLGGILITLGHIALATPF. The Extracellular portion of the chain corresponds to 112–115; that stretch reads GLSS. A helical transmembrane segment spans residues 116–134; the sequence is LFVALFLIILGTGMLKPNI. The Cytoplasmic portion of the chain corresponds to 135-154; that stretch reads SNMVGHLYSKDDSRRDTGFN. Residues 155-173 traverse the membrane as a helical segment; it reads IFVVGINMGSLIAPLIVGT. At 174 to 181 the chain is on the extracellular side; sequence VGQGVNYH. The helical transmembrane segment at 182–200 threads the bilayer; the sequence is LGFSLAAIGMIFALFAYWY. The Cytoplasmic portion of the chain corresponds to 201-224; it reads GRLRHFPEIGREPSNPMDSKARRN. A helical transmembrane segment spans residues 225 to 243; the sequence is FLITLTIVVIVAIIGFFLL. Topologically, residues 244-254 are extracellular; that stretch reads YQASPANFINN. The helical transmembrane segment at 255-273 threads the bilayer; that stretch reads FINVLSIIGIVVPIIYFVM. Topologically, residues 274–293 are cytoplasmic; that stretch reads MFTSKKVESDERRKLTAYIP. Residues 294-312 traverse the membrane as a helical segment; that stretch reads LFLSAIVFWAIEEQSSTII. The Extracellular portion of the chain corresponds to 313–335; that stretch reads AVWGESRSNLDPTWFGITFHIDP. A helical membrane pass occupies residues 336-354; it reads SWYQLLNPLFIVLLSPIFV. At 355–372 the chain is on the cytoplasmic side; that stretch reads RLWNKLGERQPSTIVKFG. Residues 373 to 391 traverse the membrane as a helical segment; sequence LGLMLTGISYLIMTLPGLL. The Extracellular portion of the chain corresponds to 392–425; the sequence is NGTSGRASALWLVLMFAVQMAGELLVSPVGLSVS. A helical transmembrane segment spans residues 426-444; the sequence is TKLAPVAFQSQMMAMWFLA. Over 445 to 497 the chain is Cytoplasmic; it reads DSTSQAINAQITPLFKAATEVHFFAITGIIGIIVGIILLIVKKPILKLMGDVR.

It belongs to the major facilitator superfamily. Proton-dependent oligopeptide transporter (POT/PTR) (TC 2.A.17) family.

It is found in the cell membrane. Functionally, proton-dependent uptake of di- or tri-peptides. This is Di-/tripeptide transporter (dtpT) from Lactococcus lactis subsp. lactis (strain IL1403) (Streptococcus lactis).